The chain runs to 164 residues: Transcription elongation factor GreA (164 aa).

Residues 15 to 76 (DRLKNELDQL…LQELLNSAKV (62 aa)) are a coiled coil.

This sequence belongs to the GreA/GreB family.

Its function is as follows. Necessary for efficient RNA polymerase transcription elongation past template-encoded arresting sites. The arresting sites in DNA have the property of trapping a certain fraction of elongating RNA polymerases that pass through, resulting in locked ternary complexes. Cleavage of the nascent transcript by cleavage factors such as GreA or GreB allows the resumption of elongation from the new 3'terminus. GreA releases sequences of 2 to 3 nucleotides. The sequence is that of Transcription elongation factor GreA from Rhodococcus erythropolis (strain PR4 / NBRC 100887).